The primary structure comprises 51 residues: FVNQHLCGSHLVEALYLVCGNDGFFYRPKAGIVDQCCTGVCSLYQLQNYCN.

Intrachain disulfides connect Cys7-Cys37, Cys19-Cys50, and Cys36-Cys41.

This sequence belongs to the insulin family. As to quaternary structure, heterodimer of a B chain and an A chain linked by two disulfide bonds.

The protein localises to the secreted. Functionally, insulin decreases blood glucose concentration. It increases cell permeability to monosaccharides, amino acids and fatty acids. It accelerates glycolysis, the pentose phosphate cycle, and glycogen synthesis in liver. In Hystrix cristata (North African crested porcupine), this protein is Insulin (INS).